A 341-amino-acid chain; its full sequence is MLKNDLFLKALKGETVQRPPVWMMRQAGRYLPEFIELRDKYDFFTRCQTPELAAEITVQPIRRIAPDAAILFSDILVVPQAMGIEVLMKENIGPFIPNPIRSMADVQRVYVPDIQESLGYVMDAIKLTKEMLNDEVPLIGFAGSPWTIFCYAVEGRGSKSFDMAKGFCFSNPVAAHTLLQKITDTTILYLKEKVKAGVDAVQIFDSWGGMLSPVDYQEFSWKYINQIVEALADLTPVIVFGKGCWFALGEMGKSRASALGVDWTCSARNARYLSGGNITLQGNFDPSRLLSPIPTIKKMVHEMIDEFGKDKYVVNLGHGILPNIPVDHAKAFIDAVKEYGQ.

Substrate-binding positions include 25 to 29, Phe-44, Asp-74, Tyr-151, Ser-206, and His-318; that span reads RQAGR.

This sequence belongs to the uroporphyrinogen decarboxylase family. Homodimer.

The protein resides in the cytoplasm. The catalysed reaction is uroporphyrinogen III + 4 H(+) = coproporphyrinogen III + 4 CO2. The protein operates within porphyrin-containing compound metabolism; protoporphyrin-IX biosynthesis; coproporphyrinogen-III from 5-aminolevulinate: step 4/4. Its function is as follows. Catalyzes the decarboxylation of four acetate groups of uroporphyrinogen-III to yield coproporphyrinogen-III. The sequence is that of Uroporphyrinogen decarboxylase from Flavobacterium johnsoniae (strain ATCC 17061 / DSM 2064 / JCM 8514 / BCRC 14874 / CCUG 350202 / NBRC 14942 / NCIMB 11054 / UW101) (Cytophaga johnsonae).